The primary structure comprises 273 residues: 4-hydroxy-tetrahydrodipicolinate reductase (273 aa).

NAD(+)-binding positions include Gly-11–Met-16, Gly-102–Thr-104, and Ser-126–Phe-129. The active-site Proton donor/acceptor is His-159. His-160 serves as a coordination point for (S)-2,3,4,5-tetrahydrodipicolinate. Residue Lys-163 is the Proton donor of the active site. Gly-169–Thr-170 contacts (S)-2,3,4,5-tetrahydrodipicolinate.

This sequence belongs to the DapB family. In terms of assembly, homotetramer.

It is found in the cytoplasm. The enzyme catalyses (S)-2,3,4,5-tetrahydrodipicolinate + NAD(+) + H2O = (2S,4S)-4-hydroxy-2,3,4,5-tetrahydrodipicolinate + NADH + H(+). It carries out the reaction (S)-2,3,4,5-tetrahydrodipicolinate + NADP(+) + H2O = (2S,4S)-4-hydroxy-2,3,4,5-tetrahydrodipicolinate + NADPH + H(+). The protein operates within amino-acid biosynthesis; L-lysine biosynthesis via DAP pathway; (S)-tetrahydrodipicolinate from L-aspartate: step 4/4. Functionally, catalyzes the conversion of 4-hydroxy-tetrahydrodipicolinate (HTPA) to tetrahydrodipicolinate. The sequence is that of 4-hydroxy-tetrahydrodipicolinate reductase from Buchnera aphidicola subsp. Cinara cedri (strain Cc).